The primary structure comprises 793 residues: Protein zer-1 homolog (793 aa).

LRR repeat units follow at residues 84 to 108 (RTSL…LMRH), 187 to 210 (LHDL…ALGS), and 269 to 294 (LRHL…ESTT).

Belongs to the zyg-11 family.

Serves as substrate adapter subunit in an E3 ubiquitin ligase complex CG12084-cul-2-elongin BC. Targets substrates bearing N-terminal glycine degrons for proteasomal degradation. The chain is Protein zer-1 homolog from Drosophila melanogaster (Fruit fly).